Here is a 79-residue protein sequence, read N- to C-terminus: CDC42 small effector protein 1-B (79 aa).

2 S-palmitoyl cysteine lipidation sites follow: cysteine 10 and cysteine 11. The 14-residue stretch at 30–43 folds into the CRIB domain; that stretch reads IGEPMNFVHLTHIG. The tract at residues 41–79 is disordered; the sequence is HIGSGDMGASDGLPKAGTVQEQMRSKCGRDRQWSNSRVL. Residues 63 to 72 are compositionally biased toward basic and acidic residues; sequence MRSKCGRDRQ.

Belongs to the CDC42SE/SPEC family.

It is found in the cytoplasm. It localises to the cytoskeleton. The protein resides in the cell membrane. Its function is as follows. Probably involved in the organization of the actin cytoskeleton by acting downstream of CDC42, inducing actin filament assembly. In Xenopus laevis (African clawed frog), this protein is CDC42 small effector protein 1-B (cdc42se1-b).